We begin with the raw amino-acid sequence, 376 residues long: Proteasome-interacting protein CIC1 (376 aa).

Disordered regions lie at residues Met-1–Ser-29 and Arg-356–Ser-376. The interval Glu-310–Ser-376 is required for interaction with CDC4. Basic and acidic residues predominate over residues Ser-357–Ser-376.

As to quaternary structure, interacts with CDC4, PRE4, PRE6, RPT1 and SCL1 as part of the fully assembled 26S proteasome. Interacts with pre-ribosomal particles constituent NOP7.

It localises to the nucleus. The protein resides in the nucleolus. An adapter protein that specifically links the 26S proteasome to its substrate CDC4 which is one of the substrate recognition subunits of the SCF E3 ubiquitin ligase complex. Required for turnover of cell cycle regulatory proteins CDC4 and GRR1. Required for synthesis and nuclear export of 60S ribosomal subunits. Required for vegetative growth. This chain is Proteasome-interacting protein CIC1 (CIC1), found in Saccharomyces cerevisiae (strain ATCC 204508 / S288c) (Baker's yeast).